The chain runs to 204 residues: dITP/XTP pyrophosphatase (204 aa).

7 to 12 (TNNKDK) contacts substrate. Mg(2+) is bound by residues aspartate 38 and aspartate 74. Aspartate 74 acts as the Proton acceptor in catalysis. Residues serine 75, 156 to 159 (FGYD), lysine 179, and 184 to 185 (HR) contribute to the substrate site.

Belongs to the HAM1 NTPase family. As to quaternary structure, homodimer. It depends on Mg(2+) as a cofactor.

The catalysed reaction is XTP + H2O = XMP + diphosphate + H(+). The enzyme catalyses dITP + H2O = dIMP + diphosphate + H(+). It catalyses the reaction ITP + H2O = IMP + diphosphate + H(+). In terms of biological role, pyrophosphatase that catalyzes the hydrolysis of nucleoside triphosphates to their monophosphate derivatives, with a high preference for the non-canonical purine nucleotides XTP (xanthosine triphosphate), dITP (deoxyinosine triphosphate) and ITP. Seems to function as a house-cleaning enzyme that removes non-canonical purine nucleotides from the nucleotide pool, thus preventing their incorporation into DNA/RNA and avoiding chromosomal lesions. This Campylobacter fetus subsp. fetus (strain 82-40) protein is dITP/XTP pyrophosphatase.